The primary structure comprises 431 residues: Isochorismate synthase MenF (431 aa).

The Proton acceptor role is filled by Lys190. The Proton donor role is filled by Glu240. 2 residues coordinate Mg(2+): Glu284 and Glu416.

It belongs to the isochorismate synthase family. In terms of assembly, homodimer. Mg(2+) is required as a cofactor.

It catalyses the reaction chorismate = isochorismate. It functions in the pathway quinol/quinone metabolism; 1,4-dihydroxy-2-naphthoate biosynthesis; 1,4-dihydroxy-2-naphthoate from chorismate: step 1/7. The protein operates within quinol/quinone metabolism; menaquinone biosynthesis. Functionally, catalyzes the conversion of chorismate to isochorismate. Can also catalyze the reverse reaction, but with a lower efficiency. This is Isochorismate synthase MenF from Escherichia coli (strain K12).